Here is a 183-residue protein sequence, read N- to C-terminus: UPF0316 protein BcerKBAB4_3093 (183 aa).

3 helical membrane passes run 6 to 26, 32 to 52, and 58 to 78; these read LIFVLQIIYVPTLTIRTILLV, SAAGVGLLEGAIYIVSLGIVF, and WMNIVAYVIGFSAGLLLGGYI.

It belongs to the UPF0316 family.

It localises to the cell membrane. The polypeptide is UPF0316 protein BcerKBAB4_3093 (Bacillus mycoides (strain KBAB4) (Bacillus weihenstephanensis)).